A 192-amino-acid chain; its full sequence is Large ribosomal subunit protein bL9 (192 aa).

Positions 172-192 (DALRPEDFFDPEADGIDEDEA) are disordered. The segment covering 179–192 (FFDPEADGIDEDEA) has biased composition (acidic residues).

This sequence belongs to the bacterial ribosomal protein bL9 family.

Binds to the 23S rRNA. In Rhizobium etli (strain CIAT 652), this protein is Large ribosomal subunit protein bL9.